Reading from the N-terminus, the 229-residue chain is Peptidase E (229 aa).

Catalysis depends on charge relay system residues Ser-120, Asp-135, and His-157.

Belongs to the peptidase S51 family.

Its subcellular location is the cytoplasm. The catalysed reaction is Dipeptidase E catalyzes the hydrolysis of dipeptides Asp-|-Xaa. It does not act on peptides with N-terminal Glu, Asn or Gln, nor does it cleave isoaspartyl peptides.. Its function is as follows. Hydrolyzes dipeptides containing N-terminal aspartate residues. May play a role in allowing the cell to use peptide aspartate to spare carbon otherwise required for the synthesis of the aspartate family of amino acids. The sequence is that of Peptidase E from Salmonella paratyphi A (strain AKU_12601).